The sequence spans 694 residues: DNA-directed RNA polymerase subunit beta' (694 aa).

Zn(2+)-binding residues include Cys-69, Cys-71, Cys-87, and Cys-90. 3 residues coordinate Mg(2+): Asp-489, Asp-491, and Asp-493.

Belongs to the RNA polymerase beta' chain family. RpoC1 subfamily. As to quaternary structure, in plastids the minimal PEP RNA polymerase catalytic core is composed of four subunits: alpha, beta, beta', and beta''. When a (nuclear-encoded) sigma factor is associated with the core the holoenzyme is formed, which can initiate transcription. The cofactor is Mg(2+). It depends on Zn(2+) as a cofactor.

It is found in the plastid. The protein localises to the chloroplast. It catalyses the reaction RNA(n) + a ribonucleoside 5'-triphosphate = RNA(n+1) + diphosphate. In terms of biological role, DNA-dependent RNA polymerase catalyzes the transcription of DNA into RNA using the four ribonucleoside triphosphates as substrates. The polypeptide is DNA-directed RNA polymerase subunit beta' (Adiantum capillus-veneris (Maidenhair fern)).